The following is a 371-amino-acid chain: Tetraacyldisaccharide 4'-kinase (371 aa).

Residue 63–70 (AVGGAGKT) coordinates ATP.

The protein belongs to the LpxK family.

The enzyme catalyses a lipid A disaccharide + ATP = a lipid IVA + ADP + H(+). It participates in glycolipid biosynthesis; lipid IV(A) biosynthesis; lipid IV(A) from (3R)-3-hydroxytetradecanoyl-[acyl-carrier-protein] and UDP-N-acetyl-alpha-D-glucosamine: step 6/6. Transfers the gamma-phosphate of ATP to the 4'-position of a tetraacyldisaccharide 1-phosphate intermediate (termed DS-1-P) to form tetraacyldisaccharide 1,4'-bis-phosphate (lipid IVA). This Anaeromyxobacter sp. (strain Fw109-5) protein is Tetraacyldisaccharide 4'-kinase.